The primary structure comprises 873 residues: Alanine--tRNA ligase (873 aa).

The Zn(2+) site is built by histidine 557, histidine 561, cysteine 659, and histidine 663.

This sequence belongs to the class-II aminoacyl-tRNA synthetase family. The cofactor is Zn(2+).

The protein localises to the cytoplasm. It catalyses the reaction tRNA(Ala) + L-alanine + ATP = L-alanyl-tRNA(Ala) + AMP + diphosphate. Its function is as follows. Catalyzes the attachment of alanine to tRNA(Ala) in a two-step reaction: alanine is first activated by ATP to form Ala-AMP and then transferred to the acceptor end of tRNA(Ala). Also edits incorrectly charged Ser-tRNA(Ala) and Gly-tRNA(Ala) via its editing domain. The protein is Alanine--tRNA ligase of Nitrosococcus oceani (strain ATCC 19707 / BCRC 17464 / JCM 30415 / NCIMB 11848 / C-107).